We begin with the raw amino-acid sequence, 368 residues long: Chaperone protein DnaJ (368 aa).

A J domain is found at 5–69; sequence DYYEVLGVAR…NQRARYDQFG (65 aa). Residues 125–207 form a CR-type zinc finger; it reads GVEKVITIPV…CRGAGRVRKN (83 aa). Zn(2+)-binding residues include C138, C141, C155, C158, C181, C184, C195, and C198. 4 CXXCXGXG motif repeats span residues 138-145, 155-162, 181-188, and 195-202; these read CGTCHGSG, CKRCGGSG, CSTCHGRG, and CETCRGAG.

This sequence belongs to the DnaJ family. Homodimer. Zn(2+) is required as a cofactor.

The protein resides in the cytoplasm. In terms of biological role, participates actively in the response to hyperosmotic and heat shock by preventing the aggregation of stress-denatured proteins and by disaggregating proteins, also in an autonomous, DnaK-independent fashion. Unfolded proteins bind initially to DnaJ; upon interaction with the DnaJ-bound protein, DnaK hydrolyzes its bound ATP, resulting in the formation of a stable complex. GrpE releases ADP from DnaK; ATP binding to DnaK triggers the release of the substrate protein, thus completing the reaction cycle. Several rounds of ATP-dependent interactions between DnaJ, DnaK and GrpE are required for fully efficient folding. Also involved, together with DnaK and GrpE, in the DNA replication of plasmids through activation of initiation proteins. This Exiguobacterium sibiricum (strain DSM 17290 / CCUG 55495 / CIP 109462 / JCM 13490 / 255-15) protein is Chaperone protein DnaJ.